We begin with the raw amino-acid sequence, 644 residues long: Threonine--tRNA ligase (644 aa).

One can recognise a TGS domain in the interval Met-1–Phe-61. The segment at Asp-241–Pro-532 is catalytic. Positions 333, 384, and 509 each coordinate Zn(2+).

It belongs to the class-II aminoacyl-tRNA synthetase family. Homodimer. Requires Zn(2+) as cofactor.

It is found in the cytoplasm. It carries out the reaction tRNA(Thr) + L-threonine + ATP = L-threonyl-tRNA(Thr) + AMP + diphosphate + H(+). Its function is as follows. Catalyzes the attachment of threonine to tRNA(Thr) in a two-step reaction: L-threonine is first activated by ATP to form Thr-AMP and then transferred to the acceptor end of tRNA(Thr). Also edits incorrectly charged L-seryl-tRNA(Thr). In Nitratidesulfovibrio vulgaris (strain DSM 19637 / Miyazaki F) (Desulfovibrio vulgaris), this protein is Threonine--tRNA ligase.